The sequence spans 248 residues: Probable transcriptional regulatory protein PHZ_c3068 (248 aa).

Belongs to the TACO1 family.

It localises to the cytoplasm. In Phenylobacterium zucineum (strain HLK1), this protein is Probable transcriptional regulatory protein PHZ_c3068.